A 163-amino-acid chain; its full sequence is Nucleotide-binding protein PM1656 (163 aa).

Belongs to the YajQ family.

Nucleotide-binding protein. This chain is Nucleotide-binding protein PM1656, found in Pasteurella multocida (strain Pm70).